Consider the following 152-residue polypeptide: Snaclec coagulation factor IX/factor X-binding protein subunit A (152 aa).

The signal sequence occupies residues Met-1–Ala-23. In terms of domain architecture, C-type lectin spans Asp-24 to Ala-152. Cystine bridges form between Cys-25–Cys-36, Cys-53–Cys-150, and Cys-125–Cys-142. Ser-64, Glu-66, and Glu-70 together coordinate Ca(2+). Glu-151 provides a ligand contact to Ca(2+).

It belongs to the snaclec family. Heterodimer of subunits A and B; disulfide-linked. Expressed by the venom gland.

The protein resides in the secreted. Anticoagulant protein which binds to the gamma-carboxyglutamic acid-domain regions of factors IX (F9) and factor X (F10) in the presence of calcium with a 1 to 1 stoichiometry. The chain is Snaclec coagulation factor IX/factor X-binding protein subunit A from Protobothrops flavoviridis (Habu).